Reading from the N-terminus, the 304-residue chain is Non-specific ribonucleoside hydrolase RihC (304 aa).

Residue His-233 is part of the active site.

The protein belongs to the IUNH family. RihC subfamily.

Functionally, hydrolyzes both purine and pyrimidine ribonucleosides with a broad-substrate specificity. The chain is Non-specific ribonucleoside hydrolase RihC from Escherichia coli (strain SE11).